Here is a 469-residue protein sequence, read N- to C-terminus: Proline--tRNA ligase (469 aa).

It belongs to the class-II aminoacyl-tRNA synthetase family. ProS type 3 subfamily. As to quaternary structure, homodimer.

The protein localises to the cytoplasm. It carries out the reaction tRNA(Pro) + L-proline + ATP = L-prolyl-tRNA(Pro) + AMP + diphosphate. Catalyzes the attachment of proline to tRNA(Pro) in a two-step reaction: proline is first activated by ATP to form Pro-AMP and then transferred to the acceptor end of tRNA(Pro). The sequence is that of Proline--tRNA ligase from Methanobrevibacter smithii (strain ATCC 35061 / DSM 861 / OCM 144 / PS).